Here is a 160-residue protein sequence, read N- to C-terminus: Cytochrome b6-f complex subunit 4 (160 aa).

Helical transmembrane passes span 36–56 (LLYIFPVVILGTIACNVGLAV), 95–115 (LLGVLLMVSVPTGLLTVPFLE), and 131–151 (TVFLIGTAVALWLGIGATLPI).

This sequence belongs to the cytochrome b family. PetD subfamily. The 4 large subunits of the cytochrome b6-f complex are cytochrome b6, subunit IV (17 kDa polypeptide, petD), cytochrome f and the Rieske protein, while the 4 small subunits are petG, petL, petM and petN. The complex functions as a dimer.

Its subcellular location is the plastid. The protein resides in the chloroplast thylakoid membrane. In terms of biological role, component of the cytochrome b6-f complex, which mediates electron transfer between photosystem II (PSII) and photosystem I (PSI), cyclic electron flow around PSI, and state transitions. The polypeptide is Cytochrome b6-f complex subunit 4 (Saccharum hybrid (Sugarcane)).